We begin with the raw amino-acid sequence, 339 residues long: Ketol-acid reductoisomerase (NADP(+)) (339 aa).

One can recognise a KARI N-terminal Rossmann domain in the interval 1-182 (MRVYYDRDAD…GGGRSGIIET (182 aa)). Residues 24-27 (YGSQ), R48, S51, S53, and 83-86 (DELQ) each bind NADP(+). H108 is a catalytic residue. G134 provides a ligand contact to NADP(+). The region spanning 183 to 328 (TFREECETDL…EKLRAMMPWI (146 aa)) is the KARI C-terminal knotted domain. 4 residues coordinate Mg(2+): D191, E195, E227, and E231. S252 contacts substrate.

Belongs to the ketol-acid reductoisomerase family. Requires Mg(2+) as cofactor.

It carries out the reaction (2R)-2,3-dihydroxy-3-methylbutanoate + NADP(+) = (2S)-2-acetolactate + NADPH + H(+). The enzyme catalyses (2R,3R)-2,3-dihydroxy-3-methylpentanoate + NADP(+) = (S)-2-ethyl-2-hydroxy-3-oxobutanoate + NADPH + H(+). It functions in the pathway amino-acid biosynthesis; L-isoleucine biosynthesis; L-isoleucine from 2-oxobutanoate: step 2/4. Its pathway is amino-acid biosynthesis; L-valine biosynthesis; L-valine from pyruvate: step 2/4. Involved in the biosynthesis of branched-chain amino acids (BCAA). Catalyzes an alkyl-migration followed by a ketol-acid reduction of (S)-2-acetolactate (S2AL) to yield (R)-2,3-dihydroxy-isovalerate. In the isomerase reaction, S2AL is rearranged via a Mg-dependent methyl migration to produce 3-hydroxy-3-methyl-2-ketobutyrate (HMKB). In the reductase reaction, this 2-ketoacid undergoes a metal-dependent reduction by NADPH to yield (R)-2,3-dihydroxy-isovalerate. In Chelativorans sp. (strain BNC1), this protein is Ketol-acid reductoisomerase (NADP(+)).